The primary structure comprises 22 residues: Unknown protein from spot 168 of 2D-PAGE of etiolated coleoptile (22 aa).

This is Unknown protein from spot 168 of 2D-PAGE of etiolated coleoptile from Zea mays (Maize).